A 403-amino-acid polypeptide reads, in one-letter code: Synaptotagmin-7 (403 aa).

Topologically, residues 1 to 16 (MYRDPEAASPGAPTRD) are vesicular. The helical transmembrane segment at 17–37 (VLLVSAIITVSLSVTIVLCGL) threads the bilayer. Residues 38-403 (CHWCQRKLGK…PVAQWHQLKA (366 aa)) are Cytoplasmic-facing. S52 carries the phosphoserine modification. Residues 53-103 (LETVGTPDSGRGRGEKKAIKLPAGGKAVNTAPVPGQTPHDESDRRTETRSS) are disordered. T58 carries the phosphothreonine modification. Position 61 is a phosphoserine (S61). The span at 90–100 (PHDESDRRTET) shows a compositional bias: basic and acidic residues. Phosphoserine occurs at positions 119 and 122. C2 domains are found at residues 135 to 255 (NLGR…TFWK) and 266 to 399 (SRGE…AQWH). D166 serves as a coordination point for Ca(2+). Asymmetric dimethylarginine is present on residues G169 and S171. D172, D225, D227, S230, D233, D297, D303, D357, D359, S362, and D365 together coordinate Ca(2+).

Belongs to the synaptotagmin family. In terms of assembly, homodimer. Can also form heterodimers with SYT6, SYT9 and SYT10. Interacts with calmodulin (CALM1, CALM2 or CALM3). Interacts with CD63; required for localization to lysosomes. Interacts with APP. Ca(2+) serves as cofactor. Post-translationally, palmitoylated at its vesicular N-terminus; palmitoylation is required for localization to lysosome and phagocytosis in macrophages. As to expression, widely expressed. Expressed in insulin-secreting cells. Present in glucagon-secreting cells (at protein level).

It is found in the cell membrane. The protein localises to the presynaptic cell membrane. It localises to the cytoplasmic vesicle. The protein resides in the secretory vesicle. Its subcellular location is the synaptic vesicle membrane. It is found in the lysosome membrane. The protein localises to the phagosome membrane. It localises to the peroxisome membrane. The protein resides in the secretory vesicle membrane. Its function is as follows. Ca(2+) sensor involved in Ca(2+)-dependent exocytosis of secretory and synaptic vesicles through Ca(2+) and phospholipid binding to the C2 domain. Ca(2+) induces binding of the C2-domains to phospholipid membranes and to assembled SNARE-complexes; both actions contribute to triggering exocytosis. SYT7 binds Ca(2+) with high affinity and slow kinetics compared to other synaptotagmins. Involved in Ca(2+)-triggered lysosomal exocytosis, a major component of the plasma membrane repair. Ca(2+)-regulated delivery of lysosomal membranes to the cell surface is also involved in the phagocytic uptake of particles by macrophages. Ca(2+)-triggered lysosomal exocytosis also plays a role in bone remodeling by regulating secretory pathways in osteoclasts and osteoblasts. Involved in cholesterol transport from lysosome to peroxisome by promoting membrane contacts between lysosomes and peroxisomes: probably acts by promoting vesicle fusion by binding phosphatidylinositol-4,5-bisphosphate on peroxisomal membranes. Acts as a key mediator of synaptic facilitation, a process also named short-term synaptic potentiation: synaptic facilitation takes place at synapses with a low initial release probability and is caused by influx of Ca(2+) into the axon terminal after spike generation, increasing the release probability of neurotransmitters. Probably mediates synaptic facilitation by directly increasing the probability of release. May also contribute to synaptic facilitation by regulating synaptic vesicle replenishment, a process required to ensure that synaptic vesicles are ready for the arrival of the next action potential: SYT7 is required for synaptic vesicle replenishment by acting as a sensor for Ca(2+) and by forming a complex with calmodulin. Also acts as a regulator of Ca(2+)-dependent insulin and glucagon secretion in beta-cells. Triggers exocytosis by promoting fusion pore opening and fusion pore expansion in chromaffin cells. Also regulates the secretion of some non-synaptic secretory granules of specialized cells. In Mus musculus (Mouse), this protein is Synaptotagmin-7.